We begin with the raw amino-acid sequence, 301 residues long: Protein ARMCX6 (301 aa).

Positions 1 to 6 (MGRARE) are mitochondrion outer membrane (MOM)-targeting sequence. Topologically, residues 1-7 (MGRAREM) are mitochondrial intermembrane. A helical; Signal-anchor membrane pass occupies residues 8–25 (GWMAAGLMIGAGACYCMY). The segment at 26-36 (KLTMGRDEGNE) is mitochondrion outer membrane (MOM)-targeting sequence. At 26-301 (KLTMGRDEGN…REMLVEAISP (276 aa)) the chain is on the cytoplasmic side. The disordered stretch occupies residues 70–105 (SEDGEWDEPGAPGGTEDRRSGGGKANRAHPTKQRPF).

The protein belongs to the eutherian X-chromosome-specific Armcx family.

It is found in the mitochondrion. It localises to the mitochondrion outer membrane. Its function is as follows. May regulate the dynamics and distribution of mitochondria in neural cells. This is Protein ARMCX6 (Armcx6) from Rattus norvegicus (Rat).